Consider the following 261-residue polypeptide: Homeobox protein ceh-33 (261 aa).

Residues 133–192 (GEETSYCFRDKSRVLLRDWYCRNSYPSPREKRELAEKTHLTVTQVSNWFKNRRQRDRAGV) constitute a DNA-binding region (homeobox).

This sequence belongs to the SIX/Sine oculis homeobox family.

The protein localises to the nucleus. The sequence is that of Homeobox protein ceh-33 (ceh-33) from Caenorhabditis elegans.